The primary structure comprises 328 residues: L-lactate dehydrogenase (328 aa).

NAD(+)-binding positions include valine 18, glutamate 39, lysine 46, tyrosine 71, and 85-86; that span reads GA. Substrate is bound by residues glutamine 88 and arginine 94. NAD(+) is bound by residues serine 107, 124–126, and serine 149; that span reads AAN. Substrate is bound at residue 126–129; that stretch reads NPVD. 154–157 lines the substrate pocket; the sequence is DSAR. Beta-D-fructose 1,6-bisphosphate-binding residues include arginine 159 and histidine 174. Histidine 181 acts as the Proton acceptor in catalysis. The residue at position 226 (tyrosine 226) is a Phosphotyrosine. Residue threonine 235 coordinates substrate.

Belongs to the LDH/MDH superfamily. LDH family. Homotetramer.

It localises to the cytoplasm. It carries out the reaction (S)-lactate + NAD(+) = pyruvate + NADH + H(+). It participates in fermentation; pyruvate fermentation to lactate; (S)-lactate from pyruvate: step 1/1. Its activity is regulated as follows. Allosterically activated by fructose 1,6-bisphosphate (FBP). Its function is as follows. Catalyzes the conversion of lactate to pyruvate. The chain is L-lactate dehydrogenase from Streptococcus pneumoniae (strain ATCC BAA-255 / R6).